We begin with the raw amino-acid sequence, 630 residues long: Cyclin-T1-2 (630 aa).

Residues 288 to 297 (QSSLSVSSSS) show a composition bias toward low complexity. Disordered stretches follow at residues 288–313 (QSSL…DSSQ) and 410–439 (RSGD…VEPP). The segment covering 421–439 (GGSSLTDVDSKSTQSVEPP) has biased composition (polar residues).

It belongs to the cyclin family. Cyclin T subfamily.

In Oryza sativa subsp. japonica (Rice), this protein is Cyclin-T1-2 (CYCT1_2).